Consider the following 863-residue polypeptide: Transforming growth factor-beta receptor-associated protein 1 homolog (863 aa).

A CNH domain is found at 23-297 (RINIECIECC…QLLQDFEGKV (275 aa)). The stretch at 564–729 (RPTSEERRGQ…LLSVYLDPDV (166 aa)) is one CHCR repeat.

Belongs to the TRAP1 family. In terms of assembly, component of the putative class C core vacuole/endosome tethering (CORVET) complex.

It is found in the cytoplasm. It localises to the early endosome. Plays a role in the TGF-beta signaling pathway. In terms of biological role, plays a role in vesicle-mediated protein trafficking of the endocytic membrane transport pathway. Believed to act as a component of the putative CORVET endosomal tethering complexes which is proposed to be involved in the Rab5-to-Rab7 endosome conversion probably implicating MON1A/B, and via binding SNAREs and SNARE complexes to mediate tethering and docking events during SNARE-mediated membrane fusion. The CORVET complex is proposed to function as a Rab5 effector to mediate early endosome fusion probably in specific endosome subpopulations. The polypeptide is Transforming growth factor-beta receptor-associated protein 1 homolog (tgfbrap1) (Danio rerio (Zebrafish)).